A 271-amino-acid chain; its full sequence is Enolase-phosphatase E1 (271 aa).

Aspartate 18 and glutamate 20 together coordinate Mg(2+). Residues 144 to 145 (SS) and lysine 194 contribute to the substrate site. Aspartate 221 serves as a coordination point for Mg(2+).

It belongs to the HAD-like hydrolase superfamily. MasA/MtnC family. Monomer. Requires Mg(2+) as cofactor.

It localises to the cytoplasm. The protein resides in the nucleus. It carries out the reaction 5-methylsulfanyl-2,3-dioxopentyl phosphate + H2O = 1,2-dihydroxy-5-(methylsulfanyl)pent-1-en-3-one + phosphate. Its pathway is amino-acid biosynthesis; L-methionine biosynthesis via salvage pathway; L-methionine from S-methyl-5-thio-alpha-D-ribose 1-phosphate: step 3/6. It functions in the pathway amino-acid biosynthesis; L-methionine biosynthesis via salvage pathway; L-methionine from S-methyl-5-thio-alpha-D-ribose 1-phosphate: step 4/6. In terms of biological role, bifunctional enzyme that catalyzes the enolization of 2,3-diketo-5-methylthiopentyl-1-phosphate (DK-MTP-1-P) into the intermediate 2-hydroxy-3-keto-5-methylthiopentenyl-1-phosphate (HK-MTPenyl-1-P), which is then dephosphorylated to form the acireductone 1,2-dihydroxy-3-keto-5-methylthiopentene (DHK-MTPene). This Candida albicans (strain WO-1) (Yeast) protein is Enolase-phosphatase E1.